Here is a 335-residue protein sequence, read N- to C-terminus: Pyridoxal 5'-phosphate synthase subunit PdxS (335 aa).

Residue aspartate 30 participates in D-ribose 5-phosphate binding. The active-site Schiff-base intermediate with D-ribose 5-phosphate is lysine 87. Glycine 159 provides a ligand contact to D-ribose 5-phosphate. Arginine 171 is a D-glyceraldehyde 3-phosphate binding site. D-ribose 5-phosphate-binding positions include glycine 257 and 278–279 (GS).

This sequence belongs to the PdxS/SNZ family. Homohexamer. In the presence of PdxT, forms a dodecamer of heterodimers.

The catalysed reaction is aldehydo-D-ribose 5-phosphate + D-glyceraldehyde 3-phosphate + L-glutamine = pyridoxal 5'-phosphate + L-glutamate + phosphate + 3 H2O + H(+). Its pathway is cofactor biosynthesis; pyridoxal 5'-phosphate biosynthesis. In terms of biological role, catalyzes the formation of pyridoxal 5'-phosphate from ribose 5-phosphate (RBP), glyceraldehyde 3-phosphate (G3P) and ammonia. The ammonia is provided by the PdxT subunit. Can also use ribulose 5-phosphate and dihydroxyacetone phosphate as substrates, resulting from enzyme-catalyzed isomerization of RBP and G3P, respectively. This Pyrococcus horikoshii (strain ATCC 700860 / DSM 12428 / JCM 9974 / NBRC 100139 / OT-3) protein is Pyridoxal 5'-phosphate synthase subunit PdxS.